The sequence spans 269 residues: Ribosomal RNA small subunit methyltransferase A (269 aa).

Residues I17, G42, E64, D89, and N109 each contribute to the S-adenosyl-L-methionine site.

This sequence belongs to the class I-like SAM-binding methyltransferase superfamily. rRNA adenine N(6)-methyltransferase family. RsmA subfamily.

It is found in the cytoplasm. It catalyses the reaction adenosine(1518)/adenosine(1519) in 16S rRNA + 4 S-adenosyl-L-methionine = N(6)-dimethyladenosine(1518)/N(6)-dimethyladenosine(1519) in 16S rRNA + 4 S-adenosyl-L-homocysteine + 4 H(+). Its function is as follows. Specifically dimethylates two adjacent adenosines (A1518 and A1519) in the loop of a conserved hairpin near the 3'-end of 16S rRNA in the 30S particle. May play a critical role in biogenesis of 30S subunits. The sequence is that of Ribosomal RNA small subunit methyltransferase A from Anaplasma phagocytophilum (strain HZ).